Here is a 127-residue protein sequence, read N- to C-terminus: Aspartate 1-decarboxylase (127 aa).

Catalysis depends on Ser25, which acts as the Schiff-base intermediate with substrate; via pyruvic acid. Ser25 is modified (pyruvic acid (Ser)). A substrate-binding site is contributed by Thr57. Catalysis depends on Tyr58, which acts as the Proton donor. 73 to 75 serves as a coordination point for substrate; sequence GAA.

This sequence belongs to the PanD family. As to quaternary structure, heterooctamer of four alpha and four beta subunits. Requires pyruvate as cofactor. In terms of processing, is synthesized initially as an inactive proenzyme, which is activated by self-cleavage at a specific serine bond to produce a beta-subunit with a hydroxyl group at its C-terminus and an alpha-subunit with a pyruvoyl group at its N-terminus.

It localises to the cytoplasm. It catalyses the reaction L-aspartate + H(+) = beta-alanine + CO2. It participates in cofactor biosynthesis; (R)-pantothenate biosynthesis; beta-alanine from L-aspartate: step 1/1. In terms of biological role, catalyzes the pyruvoyl-dependent decarboxylation of aspartate to produce beta-alanine. This chain is Aspartate 1-decarboxylase, found in Staphylococcus aureus (strain bovine RF122 / ET3-1).